The chain runs to 68 residues: UPF0434 protein H16_A0605 (68 aa).

Belongs to the UPF0434 family.

This is UPF0434 protein H16_A0605 from Cupriavidus necator (strain ATCC 17699 / DSM 428 / KCTC 22496 / NCIMB 10442 / H16 / Stanier 337) (Ralstonia eutropha).